Consider the following 104-residue polypeptide: Large ribosomal subunit protein uL24 (104 aa).

The protein belongs to the universal ribosomal protein uL24 family. Part of the 50S ribosomal subunit.

Its function is as follows. One of two assembly initiator proteins, it binds directly to the 5'-end of the 23S rRNA, where it nucleates assembly of the 50S subunit. Functionally, one of the proteins that surrounds the polypeptide exit tunnel on the outside of the subunit. In Citrobacter koseri (strain ATCC BAA-895 / CDC 4225-83 / SGSC4696), this protein is Large ribosomal subunit protein uL24.